The chain runs to 142 residues: uncharacterized protein (142 aa).

The N-acetyltransferase domain occupies 1–120 (MADKFDANDE…TILKWEKNMD (120 aa)).

Belongs to the acetyltransferase family.

This is an uncharacterized protein from Streptococcus pyogenes serotype M3 (strain ATCC BAA-595 / MGAS315).